The chain runs to 302 residues: Succinate--CoA ligase [ADP-forming] subunit alpha (302 aa).

Residues 17–20 (TGST), Lys-43, and 96–98 (ITE) contribute to the CoA site. Residue Tyr-159 participates in substrate binding. His-247 serves as the catalytic Tele-phosphohistidine intermediate.

It belongs to the succinate/malate CoA ligase alpha subunit family. In terms of assembly, heterotetramer of two alpha and two beta subunits.

The catalysed reaction is succinate + ATP + CoA = succinyl-CoA + ADP + phosphate. It carries out the reaction GTP + succinate + CoA = succinyl-CoA + GDP + phosphate. It participates in carbohydrate metabolism; tricarboxylic acid cycle; succinate from succinyl-CoA (ligase route): step 1/1. In terms of biological role, succinyl-CoA synthetase functions in the citric acid cycle (TCA), coupling the hydrolysis of succinyl-CoA to the synthesis of either ATP or GTP and thus represents the only step of substrate-level phosphorylation in the TCA. The alpha subunit of the enzyme binds the substrates coenzyme A and phosphate, while succinate binding and nucleotide specificity is provided by the beta subunit. The sequence is that of Succinate--CoA ligase [ADP-forming] subunit alpha from Staphylococcus aureus (strain COL).